The sequence spans 399 residues: Glutathione S-transferase LANCL1 (399 aa).

At alanine 2 the chain carries N-acetylalanine. The residue at position 142 (lysine 142) is an N6-acetyllysine. Zn(2+) is bound at residue cysteine 276. Position 317 (lysine 317) interacts with glutathione. Residues cysteine 322 and histidine 323 each coordinate Zn(2+). Residue 364-367 (RTPD) coordinates glutathione.

Belongs to the LanC-like protein family. As to quaternary structure, interacts with the C-terminal of STOM. Interacts with the EPS8 SH3 domain. Interaction with EPS8 is inhibited by glutathione binding. Strongly expressed in the brain, testis and skeletal muscle. Expressed in the neurons of the cerebellum, the germinal cells of the seminiferous tubules in testis, in liver hepoatocytes and in cardiac myocytes.

It is found in the cytoplasm. Its subcellular location is the cell membrane. The catalysed reaction is RX + glutathione = an S-substituted glutathione + a halide anion + H(+). It carries out the reaction 1-chloro-2,4-dinitrobenzene + glutathione = 2,4-dinitrophenyl-S-glutathione + chloride + H(+). In terms of biological role, functions as a glutathione transferase. Catalyzes conjugation of the glutathione (GSH) to artificial substrates 1-chloro-2,4-dinitrobenzene (CDNB) and p-nitrophenyl acetate. Mitigates neuronal oxidative stress during normal postnatal development and in response to oxidative stresses probably through GSH antioxidant defense mechanism. May play a role in EPS8 signaling. Binds glutathione. The polypeptide is Glutathione S-transferase LANCL1 (Rattus norvegicus (Rat)).